The chain runs to 456 residues: Smoothelin-like protein 2 (456 aa).

Residues L24–T88 adopt a coiled-coil conformation. T96 is subject to Phosphothreonine. 3 positions are modified to phosphoserine: S98, S126, and S131. Over residues H120–S129 the composition is skewed to polar residues. 3 disordered regions span residues H120 to L140, G154 to H190, and V220 to A310. A compositionally biased stretch (basic and acidic residues) spans S131–L140. Positions N163–Q174 are enriched in polar residues. Positions S242–G251 are enriched in low complexity. Residues S250, S252, and S265 each carry the phosphoserine modification. The span at L268–Q279 shows a compositional bias: pro residues. Residue T270 is modified to Phosphothreonine. S274 is subject to Phosphoserine. Over residues R298–A308 the composition is skewed to polar residues. S339 bears the Phosphoserine mark. The 108-residue stretch at S346 to R453 folds into the Calponin-homology (CH) domain.

The protein belongs to the smoothelin family.

This Mus musculus (Mouse) protein is Smoothelin-like protein 2 (Smtnl2).